The chain runs to 423 residues: SH2 domain-containing protein 5 (423 aa).

A PID domain is found at 28 to 146 (AQYVGSFPVD…LLCRSFQLAY (119 aa)). Residues 296–392 (WAFAGISRPC…LDMGRLNPTY (97 aa)) enclose the SH2 domain. A disordered region spans residues 392–423 (YEEQDCGPPGRPPRTLRPLSHAKSEAELQGLG).

As to quaternary structure, interacts with BCR.

The protein localises to the postsynaptic density. Functionally, may be involved in synaptic plasticity regulation through the control of Rac-GTP levels. This chain is SH2 domain-containing protein 5, found in Homo sapiens (Human).